Consider the following 179-residue polypeptide: Large ribosomal subunit protein eL18 (179 aa).

Belongs to the eukaryotic ribosomal protein eL18 family. As to quaternary structure, component of the large ribosomal subunit.

Its subcellular location is the cytoplasm. The protein localises to the cytosol. It is found in the rough endoplasmic reticulum. Component of the large ribosomal subunit. The ribosome is a large ribonucleoprotein complex responsible for the synthesis of proteins in the cell. The chain is Large ribosomal subunit protein eL18 (rpl18) from Salmo salar (Atlantic salmon).